Reading from the N-terminus, the 876-residue chain is Alanine--tRNA ligase (876 aa).

Positions 564, 568, 666, and 670 each coordinate Zn(2+).

The protein belongs to the class-II aminoacyl-tRNA synthetase family. Homotetramer. Zn(2+) is required as a cofactor.

It is found in the cytoplasm. The enzyme catalyses tRNA(Ala) + L-alanine + ATP = L-alanyl-tRNA(Ala) + AMP + diphosphate. Functionally, catalyzes the attachment of alanine to tRNA(Ala) in a two-step reaction: alanine is first activated by ATP to form Ala-AMP and then transferred to the acceptor end of tRNA(Ala). Also edits incorrectly charged Ser-tRNA(Ala) and Gly-tRNA(Ala) via its editing domain. The polypeptide is Alanine--tRNA ligase (Salmonella typhi).